The sequence spans 509 residues: Maturase K (509 aa).

The protein belongs to the intron maturase 2 family. MatK subfamily.

Its subcellular location is the plastid. It is found in the chloroplast. Usually encoded in the trnK tRNA gene intron. Probably assists in splicing its own and other chloroplast group II introns. The protein is Maturase K of Nicotiana paniculata.